The chain runs to 202 residues: Small ribosomal subunit protein uS4c (202 aa).

The region spanning 90-153 (MRLDNIIFRL…KSEAIISKNI (64 aa)) is the S4 RNA-binding domain.

Belongs to the universal ribosomal protein uS4 family. In terms of assembly, part of the 30S ribosomal subunit. Contacts protein S5. The interaction surface between S4 and S5 is involved in control of translational fidelity.

Its subcellular location is the plastid. The protein localises to the chloroplast. One of the primary rRNA binding proteins, it binds directly to 16S rRNA where it nucleates assembly of the body of the 30S subunit. Functionally, with S5 and S12 plays an important role in translational accuracy. This is Small ribosomal subunit protein uS4c (rps4) from Hookeria lucens (Moss).